Reading from the N-terminus, the 202-residue chain is LexA repressor (202 aa).

A DNA-binding region (H-T-H motif) is located at residues 28–48 (QQEIARAFGFRSLGTVRNYLV). Catalysis depends on for autocatalytic cleavage activity residues Ser-120 and Lys-157.

It belongs to the peptidase S24 family. In terms of assembly, homodimer.

It carries out the reaction Hydrolysis of Ala-|-Gly bond in repressor LexA.. In terms of biological role, represses a number of genes involved in the response to DNA damage (SOS response), including recA and lexA. In the presence of single-stranded DNA, RecA interacts with LexA causing an autocatalytic cleavage which disrupts the DNA-binding part of LexA, leading to derepression of the SOS regulon and eventually DNA repair. The chain is LexA repressor from Syntrophotalea carbinolica (strain DSM 2380 / NBRC 103641 / GraBd1) (Pelobacter carbinolicus).